The following is a 124-amino-acid chain: Small ribosomal subunit protein uS12 (124 aa).

The disordered stretch occupies residues 105-124 (QGVKNRKQARSRYGAKKEKG). Over residues 108 to 118 (KNRKQARSRYG) the composition is skewed to basic residues.

Belongs to the universal ribosomal protein uS12 family. As to quaternary structure, part of the 30S ribosomal subunit. Contacts proteins S8 and S17. May interact with IF1 in the 30S initiation complex.

Functionally, with S4 and S5 plays an important role in translational accuracy. Interacts with and stabilizes bases of the 16S rRNA that are involved in tRNA selection in the A site and with the mRNA backbone. Located at the interface of the 30S and 50S subunits, it traverses the body of the 30S subunit contacting proteins on the other side and probably holding the rRNA structure together. The combined cluster of proteins S8, S12 and S17 appears to hold together the shoulder and platform of the 30S subunit. The protein is Small ribosomal subunit protein uS12 (rpsL) of Mycobacterium bovis (strain ATCC BAA-935 / AF2122/97).